Consider the following 734-residue polypeptide: DNA-binding protein RFX2 (734 aa).

The segment covering 1–23 has biased composition (polar residues); the sequence is MQRSEGGSETPSTVALRTSTSAQ. A disordered region spans residues 1 to 31; sequence MQRSEGGSETPSTVALRTSTSAQAPVVQPVP. Residues 204–279 constitute a DNA-binding region (RFX-type winged-helix); that stretch reads HLQWLLDNYE…YHYYGIRLKP (76 aa). The disordered stretch occupies residues 694–722; that stretch reads DTSFSDDMTSDGDMSRMSERSLTEPAVKR. Residues 706–722 are compositionally biased toward basic and acidic residues; it reads DMSRMSERSLTEPAVKR.

It belongs to the RFX family. Homodimer. Heterodimer; heterodimerizes with other rfx proteins.

It localises to the nucleus. It is found in the cytoplasm. Its function is as follows. Transcription factor that acts as a key regulator of ciliogenesis. Specifically regulates expression of genes required for cilium assembly and function. Recognizes and binds the X-box, a regulatory motif with DNA sequence 5'-GTNRCC(0-3N)RGYAAC-3' present on promoters. The sequence is that of DNA-binding protein RFX2 (rfx2) from Danio rerio (Zebrafish).